The primary structure comprises 964 residues: Vitamin B12-dependent ribonucleotide reductase (964 aa).

Positions M1–G21 are disordered. The span at S12–G21 shows a compositional bias: basic residues. Substrate is bound by residues S142, A158–C159, G187, N363–E367, and P553–I557. Cysteines 159 and 376 form a disulfide. N363 functions as the Proton acceptor in the catalytic mechanism. C365 functions as the Cysteine radical intermediate in the catalytic mechanism. E367 serves as the catalytic Proton acceptor.

This sequence belongs to the ribonucleoside diphosphate reductase class-2 family. Requires adenosylcob(III)alamin as cofactor.

It carries out the reaction a 2'-deoxyribonucleoside 5'-diphosphate + [thioredoxin]-disulfide + H2O = a ribonucleoside 5'-diphosphate + [thioredoxin]-dithiol. Functionally, catalyzes the reduction of ribonucleotides to deoxyribonucleotides. May function to provide a pool of deoxyribonucleotide precursors for DNA repair during oxygen limitation and/or for immediate growth after restoration of oxygen. The chain is Vitamin B12-dependent ribonucleotide reductase (nrdJ) from Streptomyces avermitilis (strain ATCC 31267 / DSM 46492 / JCM 5070 / NBRC 14893 / NCIMB 12804 / NRRL 8165 / MA-4680).